Consider the following 251-residue polypeptide: 3-deoxy-manno-octulosonate cytidylyltransferase (251 aa).

This sequence belongs to the KdsB family.

It is found in the cytoplasm. It catalyses the reaction 3-deoxy-alpha-D-manno-oct-2-ulosonate + CTP = CMP-3-deoxy-beta-D-manno-octulosonate + diphosphate. It functions in the pathway nucleotide-sugar biosynthesis; CMP-3-deoxy-D-manno-octulosonate biosynthesis; CMP-3-deoxy-D-manno-octulosonate from 3-deoxy-D-manno-octulosonate and CTP: step 1/1. It participates in bacterial outer membrane biogenesis; lipopolysaccharide biosynthesis. In terms of biological role, activates KDO (a required 8-carbon sugar) for incorporation into bacterial lipopolysaccharide in Gram-negative bacteria. The sequence is that of 3-deoxy-manno-octulosonate cytidylyltransferase from Rhizobium etli (strain CIAT 652).